Consider the following 652-residue polypeptide: DNA ligase (652 aa).

NAD(+) contacts are provided by residues 29–33 (DSDYD), 78–79 (SL), and Glu-107. Lys-109 acts as the N6-AMP-lysine intermediate in catalysis. Positions 130, 164, 278, and 302 each coordinate NAD(+). Zn(2+) contacts are provided by Cys-395, Cys-398, Cys-413, and Cys-418. Residues 577-652 (NSDAALFGLT…IEDEDWLRQL (76 aa)) enclose the BRCT domain.

It belongs to the NAD-dependent DNA ligase family. LigA subfamily. Mg(2+) is required as a cofactor. Requires Mn(2+) as cofactor.

The catalysed reaction is NAD(+) + (deoxyribonucleotide)n-3'-hydroxyl + 5'-phospho-(deoxyribonucleotide)m = (deoxyribonucleotide)n+m + AMP + beta-nicotinamide D-nucleotide.. Functionally, DNA ligase that catalyzes the formation of phosphodiester linkages between 5'-phosphoryl and 3'-hydroxyl groups in double-stranded DNA using NAD as a coenzyme and as the energy source for the reaction. It is essential for DNA replication and repair of damaged DNA. In Streptococcus pyogenes serotype M4 (strain MGAS10750), this protein is DNA ligase.